Consider the following 529-residue polypeptide: UDP-glucuronosyltransferase 2B23 (529 aa).

An N-terminal signal peptide occupies residues 1–24 (MSVKWTSVILLIQLSFYFSSGSCG). Asn-67 and Asn-68 each carry an N-linked (GlcNAc...) asparagine glycan. A helical transmembrane segment spans residues 494 to 514 (IGFLLACVATVIFIIMKCCLF).

Belongs to the UDP-glycosyltransferase family. Expressed in several tissues, including the prostate, mammary gland, epididymis, testis and ovary.

It is found in the microsome membrane. The protein resides in the endoplasmic reticulum membrane. The enzyme catalyses glucuronate acceptor + UDP-alpha-D-glucuronate = acceptor beta-D-glucuronoside + UDP + H(+). UDPGTs are of major importance in the conjugation and subsequent elimination of potentially toxic xenobiotics and endogenous compounds. This isozyme has glucuronidating capacity on 6 steroids and the bile acid, hyodeoxycholic acid. May potentially play an important role in estrogen and androgen catabolism in peripheral steroid target tissues. The sequence is that of UDP-glucuronosyltransferase 2B23 (UGT2B23) from Macaca fascicularis (Crab-eating macaque).